The sequence spans 349 residues: N-formyl peptide receptor 3 (349 aa).

Over 1–27 (METNFSIPLNETEEVLPEPAGHTVLWI) the chain is Extracellular. N-linked (GlcNAc...) asparagine glycosylation is found at Asn4 and Asn10. The chain crosses the membrane as a helical span at residues 28–50 (FSLLVHGVTFIFGVLGNGLVIWV). At 51 to 61 (AGFRMTRTVNT) the chain is on the cytoplasmic side. The helical transmembrane segment at 62–83 (ICYLNLALADFSFSAILPFHMV) threads the bilayer. Residues 84–100 (SVAMREKWPFGTFLCKL) lie on the Extracellular side of the membrane. Residues Cys98 and Cys176 are joined by a disulfide bond. Residues 101 to 121 (VHVMIDINLFVSVYLITIIAL) form a helical membrane-spanning segment. The Cytoplasmic segment spans residues 122–140 (DRCICVLHPAWAQNHRTMS). The chain crosses the membrane as a helical span at residues 141 to 162 (LAKRVMTGLWILTIVLTLPNFI). Topologically, residues 163-205 (FWTTISTTNGDTYCIFNYPFWGDTVVERMNVFITMAKVSLILH) are extracellular. The helical transmembrane segment at 206 to 226 (FIIGFSIPMSIITVCYGIIVA) threads the bilayer. Over 227-242 (KIHKKRMTKSSRPLHI) the chain is Cytoplasmic. Residues 243–266 (FTAVVASFFICWFPYELTGILMAV) traverse the membrane as a helical segment. Residues 267 to 286 (WLKEILLNGKYKIILVLINP) lie on the Extracellular side of the membrane. Residues 287 to 306 (TSSLAFFNSCLNPSLYVFMG) form a helical membrane-spanning segment. Residues 307-349 (HNFQERLIRSLPTSLERALTEVPDSAQTSNTHTTSASPPEETE) are Cytoplasmic-facing. Residues 327 to 349 (EVPDSAQTSNTHTTSASPPEETE) are disordered. Residues 331–343 (SAQTSNTHTTSAS) are compositionally biased toward polar residues.

The protein belongs to the G-protein coupled receptor 1 family.

The protein localises to the cell membrane. Functionally, low affinity receptor for N-formyl-methionyl peptides, which are powerful neutrophils chemotactic factors. Binding of FMLP to the receptor causes activation of neutrophils. This response is mediated via a G-protein that activates a phosphatidylinositol-calcium second messenger system. The polypeptide is N-formyl peptide receptor 3 (FPR3) (Macaca mulatta (Rhesus macaque)).